The following is a 479-amino-acid chain: CBL-interacting serine/threonine-protein kinase 10 (479 aa).

Residues 12-266 (YDVGRLLGQG…IARIRESSWF (255 aa)) form the Protein kinase domain. ATP contacts are provided by residues 18-26 (LGQGTFAKV) and Lys41. Asp134 (proton acceptor) is an active-site residue. The activation loop stretch occupies residues 152-181 (DFGLSALADCKRQDGLLHTTCGTPAYVAPE). Phosphoserine is present on Ser156. At Thr170 the chain carries Phosphothreonine. Positions 286–323 (SVEAGTAGTNENGAGPSENGAGPSENGDRVTEENHTDE) are disordered. Residues 288–300 (EAGTAGTNENGAG) are compositionally biased toward low complexity. Residues 311 to 323 (NGDRVTEENHTDE) show a composition bias toward basic and acidic residues. In terms of domain architecture, NAF spans 322-346 (DEPTNLNAFDLIALSAGFDLAGLFG). The PPI stretch occupies residues 350-379 (KRESRFTSQKPASVIISKLEEVAQRLKLSI). The interval 456-479 (SQQETEYQQQQQQEQQEQEEPLKF) is disordered. A compositionally biased stretch (low complexity) spans 457–470 (QQETEYQQQQQQEQ).

Belongs to the protein kinase superfamily. CAMK Ser/Thr protein kinase family. SNF1 subfamily. Interacts with CBL4/SOS3. The cofactor is Mn(2+). Mostly expressed in roots.

The enzyme catalyses L-seryl-[protein] + ATP = O-phospho-L-seryl-[protein] + ADP + H(+). The catalysed reaction is L-threonyl-[protein] + ATP = O-phospho-L-threonyl-[protein] + ADP + H(+). Its function is as follows. CIPK serine-threonine protein kinases interact with CBL proteins. Binding of a CBL protein to the regulatory NAF domain of CIPK protein lead to the activation of the kinase in a calcium-dependent manner. In Arabidopsis thaliana (Mouse-ear cress), this protein is CBL-interacting serine/threonine-protein kinase 10 (CIPK10).